The sequence spans 138 residues: Small ribosomal subunit protein uS8 (138 aa).

The protein belongs to the universal ribosomal protein uS8 family. In terms of assembly, part of the 30S ribosomal subunit. Contacts proteins S5 and S12.

Its function is as follows. One of the primary rRNA binding proteins, it binds directly to 16S rRNA central domain where it helps coordinate assembly of the platform of the 30S subunit. In Thermus thermophilus (strain ATCC BAA-163 / DSM 7039 / HB27), this protein is Small ribosomal subunit protein uS8 (rpsH).